We begin with the raw amino-acid sequence, 299 residues long: MDRNEGELAQVATRLHMRAPAKVNLSLQVLSRRADGYHDLATHMQKVSLYDELELCLTKQSGVSLVCSDGDIPLDEKNLAVRAALAYLARSSRVGQRGVRISLEKNIPVGAGLGGGSSDAGTVLRGLNQLLDNEFSEEELIEMARPLGADVPFFASEMSAAFATGIGDILQPLESTKEFDFILVNPGIFISTKEIFERFSLTLSPKRNIFARPFRVHERASLLDYMHNDLEEIVSDLCPAIDEMKSLLEANGASAVMMSGSGSTVFGVFQRSVGQKKINQVCKVLSCKYGEKVFAVQAV.

K22 is an active-site residue. 108 to 118 (PVGAGLGGGSS) is a binding site for ATP. D150 is an active-site residue.

Belongs to the GHMP kinase family. IspE subfamily.

The catalysed reaction is 4-CDP-2-C-methyl-D-erythritol + ATP = 4-CDP-2-C-methyl-D-erythritol 2-phosphate + ADP + H(+). Its pathway is isoprenoid biosynthesis; isopentenyl diphosphate biosynthesis via DXP pathway; isopentenyl diphosphate from 1-deoxy-D-xylulose 5-phosphate: step 3/6. In terms of biological role, catalyzes the phosphorylation of the position 2 hydroxy group of 4-diphosphocytidyl-2C-methyl-D-erythritol. This chain is 4-diphosphocytidyl-2-C-methyl-D-erythritol kinase, found in Desulfotalea psychrophila (strain LSv54 / DSM 12343).